Consider the following 941-residue polypeptide: Cilia- and flagella-associated protein 69 (941 aa).

Its subcellular location is the cell projection. The protein localises to the cilium. It localises to the flagellum. In terms of biological role, cilium- and flagellum-associated protein. In the olfactory epithelium, regulates the speed of activation and termination of the odor response and thus contributes to the robustness of olfactory transduction pathways. Required for sperm flagellum assembly and stability. The chain is Cilia- and flagella-associated protein 69 from Callithrix jacchus (White-tufted-ear marmoset).